The chain runs to 138 residues: Nucleoside diphosphate kinase (138 aa).

Positions 10, 58, 86, 92, 103, and 113 each coordinate ATP. The Pros-phosphohistidine intermediate role is filled by His116.

The protein belongs to the NDK family. In terms of assembly, homotetramer. It depends on Mg(2+) as a cofactor.

The protein localises to the cytoplasm. It catalyses the reaction a 2'-deoxyribonucleoside 5'-diphosphate + ATP = a 2'-deoxyribonucleoside 5'-triphosphate + ADP. The catalysed reaction is a ribonucleoside 5'-diphosphate + ATP = a ribonucleoside 5'-triphosphate + ADP. In terms of biological role, major role in the synthesis of nucleoside triphosphates other than ATP. The ATP gamma phosphate is transferred to the NDP beta phosphate via a ping-pong mechanism, using a phosphorylated active-site intermediate. In Glaesserella parasuis serovar 5 (strain SH0165) (Haemophilus parasuis), this protein is Nucleoside diphosphate kinase.